We begin with the raw amino-acid sequence, 78 residues long: uncharacterized protein (78 aa).

This is an uncharacterized protein from Escherichia coli (Bacteriophage T4).